We begin with the raw amino-acid sequence, 208 residues long: Cytochrome c oxidase assembly protein CtaG (208 aa).

The Cytoplasmic portion of the chain corresponds to 1 to 19; that stretch reads MPDTQPNVSPNPIRRRGLG. A helical; Signal-anchor for type II membrane protein membrane pass occupies residues 20-42; the sequence is RDATVASICGLVVALMVGASFAA. Residues 43-208 lie on the Periplasmic side of the membrane; sequence VPFYNWFCRT…TAPDKRKGNL (166 aa).

The protein belongs to the COX11/CtaG family.

It is found in the cell inner membrane. Exerts its effect at some terminal stage of cytochrome c oxidase synthesis, probably by being involved in the insertion of the copper B into subunit I. In Rhodopseudomonas palustris (strain HaA2), this protein is Cytochrome c oxidase assembly protein CtaG.